A 488-amino-acid polypeptide reads, in one-letter code: Probable glycine dehydrogenase (decarboxylating) subunit 2 (488 aa).

An N6-(pyridoxal phosphate)lysine modification is found at Lys-264.

The protein belongs to the GcvP family. C-terminal subunit subfamily. As to quaternary structure, the glycine cleavage system is composed of four proteins: P, T, L and H. In this organism, the P 'protein' is a heterodimer of two subunits. Pyridoxal 5'-phosphate serves as cofactor.

It carries out the reaction N(6)-[(R)-lipoyl]-L-lysyl-[glycine-cleavage complex H protein] + glycine + H(+) = N(6)-[(R)-S(8)-aminomethyldihydrolipoyl]-L-lysyl-[glycine-cleavage complex H protein] + CO2. In terms of biological role, the glycine cleavage system catalyzes the degradation of glycine. The P protein binds the alpha-amino group of glycine through its pyridoxal phosphate cofactor; CO(2) is released and the remaining methylamine moiety is then transferred to the lipoamide cofactor of the H protein. This chain is Probable glycine dehydrogenase (decarboxylating) subunit 2, found in Methylococcus capsulatus (strain ATCC 33009 / NCIMB 11132 / Bath).